Here is a 95-residue protein sequence, read N- to C-terminus: Glycophorin-C (95 aa).

Over 1 to 25 the chain is Extracellular; that stretch reads MSSPVRTPPPERLEPNPGMSYAVME. The chain crosses the membrane as a helical; Signal-anchor for type III membrane protein span at residues 26-46; the sequence is IAIIAAVITAVALVLVCLLFL. At 47 to 95 the chain is on the cytoplasmic side; it reads MLRYLYRHKGTYYTNEAKGTEFAESADAALQSDPALQDAGDTSKKEYFI. Phosphoserine occurs at positions 71, 78, and 89.

It belongs to the glycophorin-C family.

The protein localises to the cell membrane. This chain is Glycophorin-C (Gypc), found in Rattus norvegicus (Rat).